Here is a 503-residue protein sequence, read N- to C-terminus: Cytochrome P450 3A13 (503 aa).

Cys442 serves as a coordination point for heme.

This sequence belongs to the cytochrome P450 family. Requires heme as cofactor.

The protein resides in the endoplasmic reticulum membrane. Its subcellular location is the microsome membrane. It carries out the reaction an organic molecule + reduced [NADPH--hemoprotein reductase] + O2 = an alcohol + oxidized [NADPH--hemoprotein reductase] + H2O + H(+). Its function is as follows. Can activate aflatoxin B1 to a genotoxic product. This is Cytochrome P450 3A13 (Cyp3a13) from Mus musculus (Mouse).